The sequence spans 310 residues: Formimidoylglutamase (310 aa).

Residues His-120, Asp-148, His-150, Asp-152, Asp-233, and Asp-235 each contribute to the Mn(2+) site.

Belongs to the arginase family. Mn(2+) is required as a cofactor.

The catalysed reaction is N-formimidoyl-L-glutamate + H2O = formamide + L-glutamate. Its pathway is amino-acid degradation; L-histidine degradation into L-glutamate; L-glutamate from N-formimidoyl-L-glutamate (hydrolase route): step 1/1. Catalyzes the conversion of N-formimidoyl-L-glutamate to L-glutamate and formamide. The polypeptide is Formimidoylglutamase (Nocardia farcinica (strain IFM 10152)).